A 77-amino-acid chain; its full sequence is Small ribosomal subunit protein uS4 (77 aa).

The tract at residues 45–77 (PFGGGRPGRVKRKNQKAAAKKASGGDGDEEDEE) is disordered. Residues 52–63 (GRVKRKNQKAAA) are compositionally biased toward basic residues.

Belongs to the universal ribosomal protein uS4 family.

The polypeptide is Small ribosomal subunit protein uS4 (RPS9) (Nicotiana tabacum (Common tobacco)).